The following is a 71-amino-acid chain: Large ribosomal subunit protein bL31 (71 aa).

C16, C18, C38, and C41 together coordinate Zn(2+).

The protein belongs to the bacterial ribosomal protein bL31 family. Type A subfamily. In terms of assembly, part of the 50S ribosomal subunit. Zn(2+) serves as cofactor.

Binds the 23S rRNA. This is Large ribosomal subunit protein bL31 from Neisseria gonorrhoeae (strain ATCC 700825 / FA 1090).